A 241-amino-acid polypeptide reads, in one-letter code: Dolichol-phosphate mannosyltransferase subunit 1 (241 aa).

GDP-alpha-D-mannose contacts are provided by P13, Y15, E17, I44, D46, D99, A100, D101, R128, R215, and K221. D101 provides a ligand contact to Mg(2+). Position 101 (D101) interacts with Mn(2+).

This sequence belongs to the glycosyltransferase 2 family. Requires Mg(2+) as cofactor. It depends on Mn(2+) as a cofactor. Ca(2+) is required as a cofactor.

The protein resides in the endoplasmic reticulum. The enzyme catalyses a di-trans,poly-cis-dolichyl phosphate + GDP-alpha-D-mannose = a di-trans,poly-cis-dolichyl beta-D-mannosyl phosphate + GDP. The protein operates within protein modification; protein glycosylation. In terms of biological role, transfers mannose from GDP-mannose to dolichol monophosphate to form dolichol phosphate mannose (Dol-P-Man) which is the mannosyl donor in pathways leading to N-glycosylation, glycosyl phosphatidylinositol membrane anchoring, and O-mannosylation of proteins. The chain is Dolichol-phosphate mannosyltransferase subunit 1 from Drosophila melanogaster (Fruit fly).